The following is a 565-amino-acid chain: FAD-linked oxidoreductase ZEB1 (565 aa).

Positions 1–27 (MKLSPSKYLPVLLGTLSLTIANPSADC) are cleaved as a signal peptide. Residues N46, N82, and N100 are each glycosylated (N-linked (GlcNAc...) asparagine). Positions 115–293 (LGNYVSYAIA…ISMTVKAHPG (179 aa)) constitute an FAD-binding PCMH-type domain. N-linked (GlcNAc...) asparagine glycosylation is found at N340, N352, and N421.

This sequence belongs to the oxygen-dependent FAD-linked oxidoreductase family.

The protein operates within mycotoxin biosynthesis. FAD-linked oxidoreductase; part of the gene cluster that mediates the biosynthesis of zearalenone (ZEA), a nonsteroid estrogen that is a contaminant of cereal grains and causes estrogenic disorders in humans and animals. The ZEA backbone is synthesized from a single acetyl-CoA molecule and eight malonyl-CoA molecules. The reducing polyketide synthase ZEA2 is proposed to synthesize a reduced hexaketide intermediate by using different combinations of its reductive domains during each round of condensation. The hexaketide thioester is then transacylated to the non-reducing polyketide synthase ZEA1 and is further condensed with three malonyl-CoAs without reductive tailoring to yield a mixed reduced/unreduced nonaketide. ZEA1 must be able to interact with ZEA2 to facilitate starter-unit acyltransfer and initiate polyketide biosynthesis. ZEA1 also mediates the required C2-C7 cyclization to form the resorcylate core and catalyzes the formation of the macrolactone. ZEB1 is then responsible for the chemical conversion of beta-zearalenonol (beta-ZOL) to ZEA in the biosynthetic pathway. The sequence is that of FAD-linked oxidoreductase ZEB1 from Gibberella zeae (strain ATCC MYA-4620 / CBS 123657 / FGSC 9075 / NRRL 31084 / PH-1) (Wheat head blight fungus).